A 175-amino-acid chain; its full sequence is Large ribosomal subunit protein bL17m (175 aa).

The transit peptide at 1–8 directs the protein to the mitochondrion; sequence MRLSVAAA. The disordered stretch occupies residues 155-175; sequence DLRQSQEASNHSSHTAQTPGI. Residues 161–175 show a composition bias toward polar residues; sequence EASNHSSHTAQTPGI.

The protein belongs to the bacterial ribosomal protein bL17 family. Component of the mitochondrial large ribosomal subunit (mt-LSU). Mature mammalian 55S mitochondrial ribosomes consist of a small (28S) and a large (39S) subunit. The 28S small subunit contains a 12S ribosomal RNA (12S mt-rRNA) and 30 different proteins. The 39S large subunit contains a 16S rRNA (16S mt-rRNA), a copy of mitochondrial valine transfer RNA (mt-tRNA(Val)), which plays an integral structural role, and 52 different proteins. In terms of tissue distribution, detected in adrenal gland, mammary gland and adipose tissue.

It localises to the mitochondrion. The protein is Large ribosomal subunit protein bL17m (MRPL17) of Homo sapiens (Human).